Consider the following 239-residue polypeptide: THAP domain-containing protein 3 (239 aa).

A THAP-type zinc finger spans residues 1–82 (MPKSCAARQC…LKHNAVPTVF (82 aa)). 2 disordered regions span residues 88–125 (PQLV…LGRK) and 139–174 (VGGL…PTQP). An HCFC1-binding motif (HBM) motif is present at residues 176-179 (DHSY).

As to quaternary structure, component of a THAP1/THAP3-HCFC1-OGT complex that contains at least, either THAP1 or THAP3, HCFC1 and OGT. Interacts directly with OGT and HCFC1 (via its HBM).

In terms of biological role, component of a THAP1/THAP3-HCFC1-OGT complex that is required for the regulation of the transcriptional activity of RRM1. The protein is THAP domain-containing protein 3 (THAP3) of Bos taurus (Bovine).